We begin with the raw amino-acid sequence, 251 residues long: 5'-nucleotidase SurE (251 aa).

A divalent metal cation contacts are provided by Asp8, Asp9, Ser39, and Asn95.

It belongs to the SurE nucleotidase family. Requires a divalent metal cation as cofactor.

The protein localises to the cytoplasm. It catalyses the reaction a ribonucleoside 5'-phosphate + H2O = a ribonucleoside + phosphate. Nucleotidase that shows phosphatase activity on nucleoside 5'-monophosphates. The sequence is that of 5'-nucleotidase SurE from Clostridium botulinum (strain Alaska E43 / Type E3).